The chain runs to 349 residues: Holliday junction branch migration complex subunit RuvB (349 aa).

A large ATPase domain (RuvB-L) region spans residues 1–183 (MTDPSRLVTP…FGIPIRLNFY (183 aa)). ATP-binding positions include Leu-22, Arg-23, Gly-64, Lys-67, Thr-68, Thr-69, 130–132 (EDF), Arg-173, Tyr-183, and Arg-220. A Mg(2+)-binding site is contributed by Thr-68. The interval 184–254 (TIEELESIVT…IADHALGALE (71 aa)) is small ATPAse domain (RuvB-S). A head domain (RuvB-H) region spans residues 257-349 (SAGLDAMDRR…GLFGDTGDQE (93 aa)). DNA is bound by residues Arg-293, Arg-312, and Arg-317.

This sequence belongs to the RuvB family. As to quaternary structure, homohexamer. Forms an RuvA(8)-RuvB(12)-Holliday junction (HJ) complex. HJ DNA is sandwiched between 2 RuvA tetramers; dsDNA enters through RuvA and exits via RuvB. An RuvB hexamer assembles on each DNA strand where it exits the tetramer. Each RuvB hexamer is contacted by two RuvA subunits (via domain III) on 2 adjacent RuvB subunits; this complex drives branch migration. In the full resolvosome a probable DNA-RuvA(4)-RuvB(12)-RuvC(2) complex forms which resolves the HJ.

Its subcellular location is the cytoplasm. The enzyme catalyses ATP + H2O = ADP + phosphate + H(+). Its function is as follows. The RuvA-RuvB-RuvC complex processes Holliday junction (HJ) DNA during genetic recombination and DNA repair, while the RuvA-RuvB complex plays an important role in the rescue of blocked DNA replication forks via replication fork reversal (RFR). RuvA specifically binds to HJ cruciform DNA, conferring on it an open structure. The RuvB hexamer acts as an ATP-dependent pump, pulling dsDNA into and through the RuvAB complex. RuvB forms 2 homohexamers on either side of HJ DNA bound by 1 or 2 RuvA tetramers; 4 subunits per hexamer contact DNA at a time. Coordinated motions by a converter formed by DNA-disengaged RuvB subunits stimulates ATP hydrolysis and nucleotide exchange. Immobilization of the converter enables RuvB to convert the ATP-contained energy into a lever motion, pulling 2 nucleotides of DNA out of the RuvA tetramer per ATP hydrolyzed, thus driving DNA branch migration. The RuvB motors rotate together with the DNA substrate, which together with the progressing nucleotide cycle form the mechanistic basis for DNA recombination by continuous HJ branch migration. Branch migration allows RuvC to scan DNA until it finds its consensus sequence, where it cleaves and resolves cruciform DNA. The protein is Holliday junction branch migration complex subunit RuvB of Rhodopseudomonas palustris (strain ATCC BAA-98 / CGA009).